Consider the following 240-residue polypeptide: Biosynthetic peptidoglycan transglycosylase (240 aa).

Residues 12–31 form a helical membrane-spanning segment; sequence ALMWFMVGSVLLVLLLRFVP.

It belongs to the glycosyltransferase 51 family.

It is found in the cell inner membrane. The enzyme catalyses [GlcNAc-(1-&gt;4)-Mur2Ac(oyl-L-Ala-gamma-D-Glu-L-Lys-D-Ala-D-Ala)](n)-di-trans,octa-cis-undecaprenyl diphosphate + beta-D-GlcNAc-(1-&gt;4)-Mur2Ac(oyl-L-Ala-gamma-D-Glu-L-Lys-D-Ala-D-Ala)-di-trans,octa-cis-undecaprenyl diphosphate = [GlcNAc-(1-&gt;4)-Mur2Ac(oyl-L-Ala-gamma-D-Glu-L-Lys-D-Ala-D-Ala)](n+1)-di-trans,octa-cis-undecaprenyl diphosphate + di-trans,octa-cis-undecaprenyl diphosphate + H(+). Its pathway is cell wall biogenesis; peptidoglycan biosynthesis. Its function is as follows. Peptidoglycan polymerase that catalyzes glycan chain elongation from lipid-linked precursors. In Pseudomonas fluorescens (strain ATCC BAA-477 / NRRL B-23932 / Pf-5), this protein is Biosynthetic peptidoglycan transglycosylase.